The chain runs to 939 residues: AP-2 complex subunit alpha (939 aa).

Residues 623–633 (RVPENEIRESK) show a composition bias toward basic and acidic residues. A disordered region spans residues 623 to 660 (RVPENEIRESKSPAPTSGPGSVLQNNVHVNNSHSKLNN). Polar residues predominate over residues 635 to 660 (PAPTSGPGSVLQNNVHVNNSHSKLNN).

Belongs to the adapter complexes large subunit family. As to quaternary structure, adaptor protein complex 2 (AP-2) is a heterotetramer composed of two large adaptins (alpha-type and beta-type subunits), a medium adaptin (mu-type subunit AP50) and a small adaptin (sigma-type subunit AP17).

It localises to the cell membrane. Its subcellular location is the membrane. It is found in the coated pit. Functionally, adaptins are components of the adapter complexes which link clathrin to receptors in coated vesicles. Clathrin-associated protein complexes are believed to interact with the cytoplasmic tails of membrane proteins, leading to their selection and concentration. Alpha adaptin is a subunit of the plasma membrane adapter. The protein is AP-2 complex subunit alpha of Drosophila pseudoobscura pseudoobscura (Fruit fly).